The primary structure comprises 272 residues: Regulatory protein RecX (272 aa).

This sequence belongs to the RecX family.

Its subcellular location is the cytoplasm. Functionally, modulates RecA activity. This is Regulatory protein RecX from Staphylococcus aureus (strain Newman).